Consider the following 492-residue polypeptide: Transcript termination protein A18 (492 aa).

One can recognise a Helicase ATP-binding domain in the interval 100-256 (MIELKRPLYI…NSIINIAKLS (157 aa)). Residue 113 to 120 (LACGFGKT) coordinates ATP. The short motif at 206–209 (DESH) is the DESH box element.

The protein belongs to the helicase family. Poxviruses subfamily. As to quaternary structure, interacts with G2. Might be part of a transcription complex composed at least of G2, A18, and H5.

The protein localises to the virion. Functionally, DNA helicase which seems to act as a postreplicative transcription termination factor. Involved in ATP-dependent release of nascent RNA. Forms a stable complex with single-stranded DNA, and to a lesser extent RNA. The chain is Transcript termination protein A18 from Bos taurus (Bovine).